The chain runs to 196 residues: Mpv17-like protein (196 aa).

Topologically, residues 1-16 are cytoplasmic; it reads MVSWWQALTRAAGRYP. Positions 16–55 are targeting to peroxisomes; sequence PWPANVLLYAGFFSGGDALQQVLRGGPADWQHTRHVATVA. The chain crosses the membrane as a helical span at residues 17-34; that stretch reads WPANVLLYAGFFSGGDAL. Residues 35-50 lie on the Lumenal side of the membrane; sequence QQVLRGGPADWQHTRH. The helical transmembrane segment at 51 to 67 threads the bilayer; it reads VATVAVAFHANLNYVWL. Over 68-90 the chain is Cytoplasmic; that stretch reads NLLERALPGRAPRTILAKVLCDQ. A helical transmembrane segment spans residues 91–108; it reads ALGGPVYVSTFYAGMSIL. The Lumenal portion of the chain corresponds to 109 to 150; it reads QGKDDIFLDMRQKFWNTYKSGLMYWPFVQLINFSLIPIRWRT. The helical transmembrane segment at 151-167 threads the bilayer; the sequence is AYTGLCGFLWATFLCFS. Topologically, residues 168–196 are cytoplasmic; that stretch reads QQEGDGTFKSAFTFRRIKVTNEVEKPSEK.

Belongs to the peroxisomal membrane protein PXMP2/4 family.

It is found in the peroxisome membrane. Participates in reactive oxygen species metabolism by up- or down-regulation of the genes of antioxidant enzymes. Protective against the mitochondrial apoptotic cascade. This Bos taurus (Bovine) protein is Mpv17-like protein (MPV17L).